A 522-amino-acid polypeptide reads, in one-letter code: 56 kDa type-specific antigen (522 aa).

Positions 1–22 (MKKIMLIASAMSALSLPFSASA) are cleaved as a signal peptide. A helical membrane pass occupies residues 67 to 87 (LTTMLPFGGTLAAGMTIAPGF). The disordered stretch occupies residues 385–417 (AQEEGDDQSQVSCNDKKQQAVAEDSKAGSSKEG). A compositionally biased stretch (basic and acidic residues) spans 398–417 (NDKKQQAVAEDSKAGSSKEG). A helical membrane pass occupies residues 470–490 (IGVVASGVLGVAINVADGVCV).

The protein localises to the cell membrane. In terms of biological role, may be an adherent factor for rickettsial adsorption to the host-cell surface and a determinant of virulence of individual rickettsial strain. It is the major outer membrane protein. This chain is 56 kDa type-specific antigen, found in Orientia tsutsugamushi (Rickettsia tsutsugamushi).